The chain runs to 348 residues: tRNA N6-adenosine threonylcarbamoyltransferase (348 aa).

Fe cation is bound by residues His120 and His124. Residues 143–147 (LVSGG), Asp176, Gly189, and Asn282 each bind substrate. Asp310 provides a ligand contact to Fe cation.

It belongs to the KAE1 / TsaD family. It depends on Fe(2+) as a cofactor.

The protein localises to the cytoplasm. The enzyme catalyses L-threonylcarbamoyladenylate + adenosine(37) in tRNA = N(6)-L-threonylcarbamoyladenosine(37) in tRNA + AMP + H(+). In terms of biological role, required for the formation of a threonylcarbamoyl group on adenosine at position 37 (t(6)A37) in tRNAs that read codons beginning with adenine. Is involved in the transfer of the threonylcarbamoyl moiety of threonylcarbamoyl-AMP (TC-AMP) to the N6 group of A37, together with TsaE and TsaB. TsaD likely plays a direct catalytic role in this reaction. The sequence is that of tRNA N6-adenosine threonylcarbamoyltransferase from Paracidovorax citrulli (strain AAC00-1) (Acidovorax citrulli).